The chain runs to 323 residues: uncharacterized protein (323 aa).

Disordered regions lie at residues 185-214 (AELM…GSSW) and 271-294 (GNII…YEKL).

It belongs to the IGBP1/TAP42 family.

This is an uncharacterized protein from Schizosaccharomyces pombe (strain 972 / ATCC 24843) (Fission yeast).